We begin with the raw amino-acid sequence, 162 residues long: Cytochrome c-type biogenesis protein CcmE (162 aa).

The Cytoplasmic segment spans residues 1 to 7 (MTRKQRR). Residues 8–28 (LTMIGGALVVLGIAAALVLNA) traverse the membrane as a helical; Signal-anchor for type II membrane protein segment. The Periplasmic portion of the chain corresponds to 29-162 (LRDSIVFFST…EASSKQEVSQ (134 aa)). Heme-binding residues include H122 and Y126. The segment at 140–162 (HWKDDYGAQPGAAEASSKQEVSQ) is disordered.

It belongs to the CcmE/CycJ family.

Its subcellular location is the cell inner membrane. Functionally, heme chaperone required for the biogenesis of c-type cytochromes. Transiently binds heme delivered by CcmC and transfers the heme to apo-cytochromes in a process facilitated by CcmF and CcmH. This Nitrobacter winogradskyi (strain ATCC 25391 / DSM 10237 / CIP 104748 / NCIMB 11846 / Nb-255) protein is Cytochrome c-type biogenesis protein CcmE.